A 165-amino-acid polypeptide reads, in one-letter code: Mitochondrial fission process protein 1 (165 aa).

The next 3 membrane-spanning stretches (helical) occupy residues 35–55 (ALVP…YVTA), 76–96 (VCVC…SVAV), and 130–150 (IGLS…DLLL).

The protein belongs to the MTFP1 family.

The protein localises to the mitochondrion inner membrane. In terms of biological role, involved in the mitochondrial division probably by regulating membrane fission. Loss-of-function leads to apoptosis. This chain is Mitochondrial fission process protein 1 (mtfp1), found in Danio rerio (Zebrafish).